Reading from the N-terminus, the 497-residue chain is 4,4'-diaponeurosporene oxygenase (497 aa).

Position 7–19 (7–19 (VIGGGLGGISAAI)) interacts with FAD.

Belongs to the carotenoid/retinoid oxidoreductase family. CrtP subfamily. FAD is required as a cofactor.

The catalysed reaction is all-trans-4,4'-diaponeurosporene + 2 AH2 + 2 O2 = 4,4'-diaponeurosporenal + 2 A + 3 H2O. The protein operates within carotenoid biosynthesis; staphyloxanthin biosynthesis; staphyloxanthin from farnesyl diphosphate: step 3/5. Its function is as follows. Involved in the biosynthesis of the yellow-orange carotenoid staphyloxanthin, which plays a role in the virulence via its protective function against oxidative stress. Catalyzes the oxidation of the terminal methyl side group of 4,4'-diaponeurosporene to form 4,4'-diaponeurosporen-4-al. The polypeptide is 4,4'-diaponeurosporene oxygenase (Staphylococcus aureus (strain USA300)).